The chain runs to 369 residues: Putative agmatine deiminase (369 aa).

Cys361 serves as the catalytic Amidino-cysteine intermediate.

It belongs to the agmatine deiminase family.

The enzyme catalyses agmatine + H2O = N-carbamoylputrescine + NH4(+). In Streptococcus mutans serotype c (strain ATCC 700610 / UA159), this protein is Putative agmatine deiminase.